The chain runs to 719 residues: Aminodeoxychorismate synthase (719 aa).

The Glutamine amidotransferase type-1 domain occupies 5-199 (RTLLIDNYDS…RDLSLRAAGH (195 aa)). Cys-86 (nucleophile) is an active-site residue. Residues His-173 and Glu-175 contribute to the active site. Residues 199 to 224 (HRPPHTERIPAPAPAPAPAPAPAPPA) are disordered. Pro residues predominate over residues 209 to 224 (APAPAPAPAPAPAPPA).

The protein in the C-terminal section; belongs to the anthranilate synthase component I family.

It catalyses the reaction chorismate + L-glutamine = 4-amino-4-deoxychorismate + L-glutamate. It participates in antibiotic biosynthesis. Functionally, involved in pristinamycin I biosynthesis. Catalyzes the biosynthesis of 4-amino-4-deoxychorismate (ADC) from chorismate and glutamine. This is Aminodeoxychorismate synthase from Streptomyces pristinaespiralis.